The primary structure comprises 359 residues: Aminomethyltransferase (359 aa).

It belongs to the GcvT family. In terms of assembly, the glycine cleavage system is composed of four proteins: P, T, L and H.

It carries out the reaction N(6)-[(R)-S(8)-aminomethyldihydrolipoyl]-L-lysyl-[protein] + (6S)-5,6,7,8-tetrahydrofolate = N(6)-[(R)-dihydrolipoyl]-L-lysyl-[protein] + (6R)-5,10-methylene-5,6,7,8-tetrahydrofolate + NH4(+). In terms of biological role, the glycine cleavage system catalyzes the degradation of glycine. The chain is Aminomethyltransferase from Synechococcus sp. (strain RCC307).